A 553-amino-acid polypeptide reads, in one-letter code: Solute carrier family 22 member 12 (553 aa).

A helical transmembrane segment spans residues 9 to 29; that stretch reads LVGGLGRFQVLQTMALMVSIM. Asparagine 56 and asparagine 102 each carry an N-linked (GlcNAc...) asparagine glycan. The next 11 helical transmembrane spans lie at 146-166, 174-194, 195-215, 232-252, 260-280, 351-371, 378-398, 407-427, 435-455, 466-486, and 495-515; these read PMAQ…CGPA, LVLT…AFAP, AFPV…GVMM, LVMT…AAVA, LLQL…WWLA, CIST…ALDL, IFLL…GALL, PTLA…TLVP, SALA…ITIY, MTAV…GPLV, and WLPL…ALLL. Threonine 542 is subject to Phosphothreonine.

The protein belongs to the major facilitator (TC 2.A.1) superfamily. Organic cation transporter (TC 2.A.1.19) family. In terms of assembly, interacts with PDZK1. Post-translationally, N-glycosylated. As to expression, detected in kidney (at protein level). Detected in fetal and adult kidney. Detected in epithelial cells of proximal tubules in renal cortex.

The protein localises to the apical cell membrane. It carries out the reaction urate(out) + (S)-lactate(in) = urate(in) + (S)-lactate(out). The enzyme catalyses nicotinate(in) + urate(out) = nicotinate(out) + urate(in). It catalyses the reaction urate(out) + n chloride(in) = urate(in) + n chloride(out). The catalysed reaction is orotate(out) + nicotinate(in) = orotate(in) + nicotinate(out). In terms of biological role, electroneutral antiporter that translocates urate across the apical membrane of proximal tubular cells in exchange for monovalent organic or inorganic anions. Involved in renal reabsorption of urate and helps maintaining blood levels of uric acid. Mediates urate uptake by an exchange with organic anions such as (S)-lactate and nicotinate, and inorganic anion Cl(-). Other inorganic anions such as Br(-), I(-) and NO3(-) may also act as counteranions that exchange for urate. Also mediates orotate tubular uptake coupled with nicotinate efflux and to a lesser extent with lactate efflux, therefore displaying a potential role in orotate renal reabsorption. Orotate transport is Cl(-)-dependent. The polypeptide is Solute carrier family 22 member 12 (Homo sapiens (Human)).